The sequence spans 589 residues: MSTNYTAINHILHFHSPNSCFLMIMSLEFEQMDEANRLSAWNGYVDWRSRPALRGRHGGMLAASFVLVVEVLENLAFLANASNLVLYLSTKMGFSPSGAANAVTAFMGTAFFLALLGGFLADAFFTTFHIYLVSAAIEFLGLMVLTVQAHEHSTEPWSRVFLFVGLYLVALGVGGIKGSLPPHGAEQFDEETSSGRRQRSFFFNYFIFSLSCGALIAVTVVVWLEDNKGWSYGFGVSTAAILISVPVFLAGSRVYRLKVPSGSPITTLFKVLTAALYAKYKKRRTSRIVVTCHTRNDCDDSVTKQNCDGDDGFLGSFLGEVVRERESLPRPLRCTEEQVKDVKIVIKILPIFMSTIMLNCCLAQLSTFSVQQASTMNTKLGSFTVPPAALPVFPVVFMMILAPTYNHLLLPLARKSTKTETGITHLQRIGTGLVLSIVAMAVAALVETKRKHVVVSCCSNNNSSSYSSSPLPITFLWVAIQYVFLGSADLFTLAGMMEFFFTEAPSTMRSLATSLSWASLAMGYYFSSVLVSAVNFVTGLNHHNPWLLGENLNQYHLERFYWLMCVLSGINFLHYLFWASRYVYRSNQG.

The next 12 helical transmembrane spans lie at 59 to 79, 105 to 125, 127 to 147, 160 to 180, 201 to 221, 230 to 250, 344 to 364, 383 to 403, 429 to 449, 471 to 491, 520 to 540, and 560 to 580; these read GMLAASFVLVVEVLENLAFLA, AFMGTAFFLALLGGFLADAFF, TFHIYLVSAAIEFLGLMVLTV, VFLFVGLYLVALGVGGIKGSL, FFFNYFIFSLSCGALIAVTVV, WSYGFGVSTAAILISVPVFLA, IVIKILPIFMSTIMLNCCLAQ, FTVPPAALPVFPVVFMMILAP, IGTGLVLSIVAMAVAALVETK, LPITFLWVAIQYVFLGSADLF, LAMGYYFSSVLVSAVNFVTGL, and FYWLMCVLSGINFLHYLFWAS.

It belongs to the major facilitator superfamily. Proton-dependent oligopeptide transporter (POT/PTR) (TC 2.A.17) family. Expressed in flowers.

Its subcellular location is the membrane. The protein is Protein NRT1/ PTR FAMILY 4.7 (NPF4.7) of Arabidopsis thaliana (Mouse-ear cress).